A 178-amino-acid chain; its full sequence is Large ribosomal subunit protein uL6 (178 aa).

Belongs to the universal ribosomal protein uL6 family. In terms of assembly, part of the 50S ribosomal subunit.

This protein binds to the 23S rRNA, and is important in its secondary structure. It is located near the subunit interface in the base of the L7/L12 stalk, and near the tRNA binding site of the peptidyltransferase center. In Staphylococcus carnosus (strain TM300), this protein is Large ribosomal subunit protein uL6.